Reading from the N-terminus, the 296-residue chain is Glycine--tRNA ligase alpha subunit (296 aa).

This sequence belongs to the class-II aminoacyl-tRNA synthetase family. As to quaternary structure, tetramer of two alpha and two beta subunits.

The protein resides in the cytoplasm. It catalyses the reaction tRNA(Gly) + glycine + ATP = glycyl-tRNA(Gly) + AMP + diphosphate. This is Glycine--tRNA ligase alpha subunit from Maricaulis maris (strain MCS10) (Caulobacter maris).